The following is a 94-amino-acid chain: Transcription factor PRE6 (94 aa).

Positions 1 to 20 (MSSRRSSRSRQSGSSRISDD) are disordered. In terms of domain architecture, bHLH spans 6-60 (SSRSRQSGSSRISDDQISDLVSKLQHLIPELRRRRSDKVSASKVLQETCNYIRNL).

This sequence belongs to the bHLH protein family. In terms of assembly, interacts with HFR1.

The protein resides in the cytoplasm. It is found in the nucleus. Functionally, atypical and probable non DNA-binding bHLH transcription factor that regulates light-mediated responses in day light conditions by binding and inhibiting the activity of the bHLH transcription factor HFR1, a critical regulator of light signaling and shade avoidance. Forms non-functional heterodimers with HFR1, causing liberation and activation of PIF4 from the transcriptionally inactive HFR1-PIF4 complex. This chain is Transcription factor PRE6 (PRE6), found in Arabidopsis thaliana (Mouse-ear cress).